A 308-amino-acid chain; its full sequence is Aspartate carbamoyltransferase catalytic subunit (308 aa).

Carbamoyl phosphate contacts are provided by Arg-57 and Thr-58. Position 86 (Lys-86) interacts with L-aspartate. Carbamoyl phosphate-binding residues include Arg-107, His-135, and Gln-138. Positions 168 and 228 each coordinate L-aspartate. The carbamoyl phosphate site is built by Leu-267 and Pro-268.

This sequence belongs to the aspartate/ornithine carbamoyltransferase superfamily. ATCase family. Heterododecamer (2C3:3R2) of six catalytic PyrB chains organized as two trimers (C3), and six regulatory PyrI chains organized as three dimers (R2).

It carries out the reaction carbamoyl phosphate + L-aspartate = N-carbamoyl-L-aspartate + phosphate + H(+). It participates in pyrimidine metabolism; UMP biosynthesis via de novo pathway; (S)-dihydroorotate from bicarbonate: step 2/3. Its function is as follows. Catalyzes the condensation of carbamoyl phosphate and aspartate to form carbamoyl aspartate and inorganic phosphate, the committed step in the de novo pyrimidine nucleotide biosynthesis pathway. In Leptospira borgpetersenii serovar Hardjo-bovis (strain JB197), this protein is Aspartate carbamoyltransferase catalytic subunit.